Reading from the N-terminus, the 188-residue chain is Mitochondrial import receptor subunit TOM20 homolog (188 aa).

At 1–12 (MTDTLFGFNKSN) the chain is on the mitochondrial intermembrane side. Residues 13–31 (VVLAAGVAGAAFLGYCIYF) form a helical membrane-spanning segment. Topologically, residues 32–188 (DHKRINAPDY…ELIDDTDDLE (157 aa)) are cytoplasmic. Disordered stretches follow at residues 48–67 (KRRAQAGSGGMAARRPPAGG) and 155–188 (ADEAENEPPLVQYLGDGPPPAQIQELIDDTDDLE). The segment covering 58-67 (MAARRPPAGG) has biased composition (low complexity).

This sequence belongs to the Tom20 family. Forms part of the preprotein translocase complex of the outer mitochondrial membrane (TOM complex).

Its subcellular location is the mitochondrion outer membrane. Its function is as follows. Central component of the receptor complex responsible for the recognition and translocation of cytosolically synthesized mitochondrial preproteins. Together with TOM22 functions as the transit peptide receptor at the surface of the mitochondrion outer membrane and facilitates the movement of preproteins into the translocation pore. This is Mitochondrial import receptor subunit TOM20 homolog (tomm-20) from Caenorhabditis briggsae.